A 610-amino-acid polypeptide reads, in one-letter code: MRSNGCGDLREQNIDQQVQLCGWVDRRRDHGGVIFIDLRDRSGTVQIKVDPDLGAEAFAVAEHLRSETVLQVAGKVRARPGESLNDKLATGAVEVLASGIIVLNNVKGNLPFPVSVHDEENTREELRLRHRYLDLRRKRMNDNLRLRAQTIQAARRFLEDEGFIEVETPVLTRSTPEGARDYVLPSRVCGGEWFALPQSPQLFKQLLMVGGIERYYQVARCFRDEDLRADRQPEFTQLDIEMSFMDQEEILQLNESLICSIWKAVKGIDLPRPFPRMTWHDAMERYGTDRPDTRYGMELTNVSDIVKDMGFKVFSGAVKSGGAVKCIAVPGGNDALSNVRIKPGGDVFSEAQKAGAGGLAFIRVRNGCEIDSIGAIKDNLSDEQKQELLSRTGAEPGTLLLFGAGDTATVNKALDRVRQYLAKELGMVKADQDNDQWNFLWVVDFPMFEFNSEENRYEALHHPFCAPNAEDLSSDASQWADTLPGARAQAYDLVLNGLELGGGSLRIHDSALQRQVLQTVGLPLEEAQEQFGFLMDALDVGAPPHGGLAFGVDRMVMLLAGEESIRDTIAFPKTQQARCLMTNAPGGVADKQLEELHVASTWVDPSGEDD.

Glutamate 177 contacts L-aspartate. The tract at residues 201–204 (QLFK) is aspartate. Arginine 223 contributes to the L-aspartate binding site. ATP contacts are provided by residues 223 to 225 (RDE) and glutamine 232. Histidine 461 serves as a coordination point for L-aspartate. Glutamate 499 serves as a coordination point for ATP. L-aspartate is bound at residue arginine 506. 551 to 554 (GVDR) serves as a coordination point for ATP.

It belongs to the class-II aminoacyl-tRNA synthetase family. Type 1 subfamily. Homodimer.

The protein localises to the cytoplasm. It catalyses the reaction tRNA(Asx) + L-aspartate + ATP = L-aspartyl-tRNA(Asx) + AMP + diphosphate. Functionally, aspartyl-tRNA synthetase with relaxed tRNA specificity since it is able to aspartylate not only its cognate tRNA(Asp) but also tRNA(Asn). Reaction proceeds in two steps: L-aspartate is first activated by ATP to form Asp-AMP and then transferred to the acceptor end of tRNA(Asp/Asn). The chain is Aspartate--tRNA(Asp/Asn) ligase from Parasynechococcus marenigrum (strain WH8102).